Here is a 461-residue protein sequence, read N- to C-terminus: Cysteine--tRNA ligase (461 aa).

Position 29 (Cys-29) interacts with Zn(2+). Residues Met-31–His-41 carry the 'HIGH' region motif. Zn(2+)-binding residues include Cys-210, His-235, and Glu-239. Positions Lys-267–Ser-271 match the 'KMSKS' region motif. Lys-270 provides a ligand contact to ATP.

It belongs to the class-I aminoacyl-tRNA synthetase family. Monomer. Requires Zn(2+) as cofactor.

It localises to the cytoplasm. The catalysed reaction is tRNA(Cys) + L-cysteine + ATP = L-cysteinyl-tRNA(Cys) + AMP + diphosphate. The chain is Cysteine--tRNA ligase from Stutzerimonas stutzeri (strain A1501) (Pseudomonas stutzeri).